The following is a 127-amino-acid chain: Small ribosomal subunit protein uS11 (127 aa).

It belongs to the universal ribosomal protein uS11 family. Part of the 30S ribosomal subunit. Interacts with proteins S7 and S18. Binds to IF-3.

Its function is as follows. Located on the platform of the 30S subunit, it bridges several disparate RNA helices of the 16S rRNA. Forms part of the Shine-Dalgarno cleft in the 70S ribosome. This is Small ribosomal subunit protein uS11 from Chlorobium phaeobacteroides (strain BS1).